Consider the following 216-residue polypeptide: MAAGPRNSMLLVFALLSLPWPQEVGAFPAMPLSSLFANAVLRAQHLHQLAADTYKDFERAYIPEGQRYSIQNAQAAFCFSETIPAPTGKDEAQQRSDMELLRFSLLLIQSWLGPVQFLSRVFTNSLVFGTSDRVYEKLKDLEEGIQALMRELEDGSPRAGPILKQTYDKFDTNLRSDDALLKNYGLLSCFKKDLHKAETYLRVMKCRRFVESSCAF.

The signal sequence occupies residues 1–26 (MAAGPRNSMLLVFALLSLPWPQEVGA). H45 serves as a coordination point for Zn(2+). Residues C78 and C189 are joined by a disulfide bond. S131 carries the phosphoserine modification. E198 contacts Zn(2+). C206 and C214 are disulfide-bonded.

The protein belongs to the somatotropin/prolactin family.

The protein resides in the secreted. Functionally, plays an important role in growth control. Its major role in stimulating body growth is to stimulate the liver and other tissues to secrete IGF1. It stimulates both the differentiation and proliferation of myoblasts. It also stimulates amino acid uptake and protein synthesis in muscle and other tissues. The chain is Somatotropin (GH1) from Neovison vison (American mink).